Reading from the N-terminus, the 415-residue chain is Serine hydroxymethyltransferase (415 aa).

(6S)-5,6,7,8-tetrahydrofolate contacts are provided by residues L118 and 122 to 124 (GHL). Position 227 is an N6-(pyridoxal phosphate)lysine (K227).

This sequence belongs to the SHMT family. As to quaternary structure, homodimer. It depends on pyridoxal 5'-phosphate as a cofactor.

The protein localises to the cytoplasm. It carries out the reaction (6R)-5,10-methylene-5,6,7,8-tetrahydrofolate + glycine + H2O = (6S)-5,6,7,8-tetrahydrofolate + L-serine. Its pathway is one-carbon metabolism; tetrahydrofolate interconversion. It functions in the pathway amino-acid biosynthesis; glycine biosynthesis; glycine from L-serine: step 1/1. Functionally, catalyzes the reversible interconversion of serine and glycine with tetrahydrofolate (THF) serving as the one-carbon carrier. This reaction serves as the major source of one-carbon groups required for the biosynthesis of purines, thymidylate, methionine, and other important biomolecules. Also exhibits THF-independent aldolase activity toward beta-hydroxyamino acids, producing glycine and aldehydes, via a retro-aldol mechanism. This is Serine hydroxymethyltransferase from Elusimicrobium minutum (strain Pei191).